Here is a 2415-residue protein sequence, read N- to C-terminus: Spectrin alpha chain, erythrocytic 1 (2415 aa).

9 Spectrin repeats span residues 52–152 (YHYQ…SDVL), 157–259 (KFYQ…ESLS), 263–365 (DLQR…AKLK), 370–471 (YHRF…HQYR), 475–576 (DFHL…RKLL), 580–681 (QLLQ…GTQL), 686–787 (QLLQ…KKKL), 792–894 (KLQQ…NDLK), and 898–967 (QLQQ…QQQQ). S257 is subject to Phosphoserine. The region spanning 975-1034 (GREARVIALYDFEARSRREVSMKKNDVLTLLSSINKDWWKVEADDHQGFVPAVYVRKLAP) is the SH3 domain. A Phosphoserine modification is found at S990. Spectrin repeat units lie at residues 1085–1177 (LAYE…YQLL), 1183–1285 (VEMF…SLNE), 1287–1390 (HKFF…KMLD), 1394–1489 (ELQL…QLLT), 1499–1603 (DLKQ…KLNE), 1606–1709 (RQQR…KLKE), 1712–1815 (ALFQ…NLEE), 1818–1921 (EYLQ…SQLD), 1924–2029 (HAFQ…KLLE), 2040–2142 (LFME…QELQ), and 2154–2254 (MCQE…NLEQ). A Phosphoserine modification is found at S1972. EF-hand domains lie at 2267 to 2302 (ETLK…LNYY), 2310 to 2345 (EPEP…KESE), and 2347 to 2382 (IKTS…EQVS). The Ca(2+) site is built by D2280, N2282, T2284, R2286, E2291, D2323, Y2329, and D2334.

It belongs to the spectrin family. As to quaternary structure, composed of non-homologous chains, alpha and beta, which aggregate to form dimers, tetramers, and higher polymers. Interacts with FASLG. Interacts with BCAM.

The protein localises to the cytoplasm. Its subcellular location is the cytoskeleton. It is found in the cell cortex. Its function is as follows. Spectrin is the major constituent of the cytoskeletal network underlying the erythrocyte plasma membrane. It associates with band 4.1 and actin to form the cytoskeletal superstructure of the erythrocyte plasma membrane. This Mus musculus (Mouse) protein is Spectrin alpha chain, erythrocytic 1 (Spta1).